The primary structure comprises 1121 residues: RecBCD enzyme subunit RecC (1121 aa).

The protein belongs to the RecC family. As to quaternary structure, heterotrimer of RecB, RecC and RecD. All subunits contribute to DNA-binding.

In terms of biological role, a helicase/nuclease that prepares dsDNA breaks (DSB) for recombinational DNA repair. Binds to DSBs and unwinds DNA via a highly rapid and processive ATP-dependent bidirectional helicase activity. Unwinds dsDNA until it encounters a Chi (crossover hotspot instigator) sequence from the 3' direction. Cuts ssDNA a few nucleotides 3' to the Chi site. The properties and activities of the enzyme are changed at Chi. The Chi-altered holoenzyme produces a long 3'-ssDNA overhang and facilitates RecA-binding to the ssDNA for homologous DNA recombination and repair. Holoenzyme degrades any linearized DNA that is unable to undergo homologous recombination. In the holoenzyme this subunit recognizes the wild-type Chi sequence, and when added to isolated RecB increases its ATP-dependent helicase processivity. The polypeptide is RecBCD enzyme subunit RecC (Haemophilus influenzae (strain ATCC 51907 / DSM 11121 / KW20 / Rd)).